The chain runs to 82 residues: ATP synthase subunit c, chloroplastic (82 aa).

The next 2 helical transmembrane spans lie at 7 to 27 and 57 to 77; these read GASV…PGIG and LAFM…LLFA.

The protein belongs to the ATPase C chain family. In terms of assembly, F-type ATPases have 2 components, F(1) - the catalytic core - and F(0) - the membrane proton channel. F(1) has five subunits: alpha(3), beta(3), gamma(1), delta(1), epsilon(1). F(0) has four main subunits: a(1), b(1), b'(1) and c(10-14). The alpha and beta chains form an alternating ring which encloses part of the gamma chain. F(1) is attached to F(0) by a central stalk formed by the gamma and epsilon chains, while a peripheral stalk is formed by the delta, b and b' chains.

It is found in the plastid. It localises to the chloroplast thylakoid membrane. F(1)F(0) ATP synthase produces ATP from ADP in the presence of a proton or sodium gradient. F-type ATPases consist of two structural domains, F(1) containing the extramembraneous catalytic core and F(0) containing the membrane proton channel, linked together by a central stalk and a peripheral stalk. During catalysis, ATP synthesis in the catalytic domain of F(1) is coupled via a rotary mechanism of the central stalk subunits to proton translocation. Its function is as follows. Key component of the F(0) channel; it plays a direct role in translocation across the membrane. A homomeric c-ring of between 10-14 subunits forms the central stalk rotor element with the F(1) delta and epsilon subunits. The sequence is that of ATP synthase subunit c, chloroplastic from Emiliania huxleyi (Coccolithophore).